The chain runs to 129 residues: M-zodatoxin-Lt8a (129 aa).

Residues 1 to 20 (MKYFVVALALVAAFACIAES) form the signal peptide. Positions 21–60 (KPAESEHELAEVEEENELADLEDAVWLEHLADLSDLEEAR) are excised as a propeptide. Positions 57–60 (EEAR) match the Processing quadruplet motif motif.

Belongs to the cationic peptide 06 (cytoinsectotoxin) family. Cleavage of the propeptide depends on the processing quadruplet motif (XXXR, with at least one of X being E). In terms of tissue distribution, expressed by the venom gland.

Its subcellular location is the secreted. In terms of biological role, insecticidal, cytolytic and antimicrobial peptide. Has insecticidal activity against the flesh fly S.carnaria, and against the cockroach N.cinerea. Has insecticidal activity against D.melanogaster. Has hemolytic activity against human erythrocytes (EC(50)=6 uM). Has cytolytic activity against insect Sf9 cells (EC(50)=1 uM) and human leukocytes (EC(50)=3 uM). Has antibacterial activity against the Gram-positive bacteria A.globiformis VKM Ac-1112 (MIC=0.5 uM), and B.subtilis VKM B-501 (MIC=0.6-0.9 uM), and against the Gram-negative bacteria E.coli C600 (MIC=0.5 uM), E.coli DH5alpha (MIC=0.9 uM), E.coli MH1 (MIC=0.5 uM), P.aeruginosa PAO1 (MIC=1.9 uM), and P.fluorescens VKM B-894 (MIC=3.8 uM). Lacks antimicrobial activity against the Gram-positive bacteria M.luteus and S.aureus, and against the Gram-negative bacterium S.marcescens. Forms voltage-dependent, ion-permeable channels in membranes. At high concentration causes cell membrane lysis. This Lachesana tarabaevi (Spider) protein is M-zodatoxin-Lt8a (cit 1-1).